Consider the following 494-residue polypeptide: Glutamyl-tRNA reductase (494 aa).

Residues 58–61, serine 118, 123–125, and glutamine 129 contribute to the substrate site; these read TCNR and EQQ. The active-site Nucleophile is the cysteine 59. 205 to 210 serves as a coordination point for NADP(+); it reads GAGAMA. Positions 448–494 are disordered; it reads KGANAGSGQRKKQKPQENRVSTARAVYRSTYQDLTQASTPGGKDDDQ. A compositionally biased stretch (polar residues) spans 476–486; that stretch reads STYQDLTQAST.

The protein belongs to the glutamyl-tRNA reductase family. In terms of assembly, homodimer.

The enzyme catalyses (S)-4-amino-5-oxopentanoate + tRNA(Glu) + NADP(+) = L-glutamyl-tRNA(Glu) + NADPH + H(+). It participates in porphyrin-containing compound metabolism; protoporphyrin-IX biosynthesis; 5-aminolevulinate from L-glutamyl-tRNA(Glu): step 1/2. In terms of biological role, catalyzes the NADPH-dependent reduction of glutamyl-tRNA(Glu) to glutamate 1-semialdehyde (GSA). This is Glutamyl-tRNA reductase from Corynebacterium urealyticum (strain ATCC 43042 / DSM 7109).